The following is a 382-amino-acid chain: Lipid-A-disaccharide synthase (382 aa).

The protein belongs to the LpxB family.

The enzyme catalyses 2-N,3-O-bis[(3R)-3-hydroxytetradecanoyl]-alpha-D-glucosaminyl 1-phosphate + UDP-2-N,3-O-bis[(3R)-3-hydroxytetradecanoyl]-alpha-D-glucosamine = lipid A disaccharide (E. coli) + UDP + H(+). It carries out the reaction a lipid X + a UDP-2-N,3-O-bis[(3R)-3-hydroxyacyl]-alpha-D-glucosamine = a lipid A disaccharide + UDP + H(+). Its pathway is glycolipid biosynthesis; lipid IV(A) biosynthesis; lipid IV(A) from (3R)-3-hydroxytetradecanoyl-[acyl-carrier-protein] and UDP-N-acetyl-alpha-D-glucosamine: step 5/6. In terms of biological role, condensation of UDP-2,3-diacylglucosamine and 2,3-diacylglucosamine-1-phosphate to form lipid A disaccharide, a precursor of lipid A, a phosphorylated glycolipid that anchors the lipopolysaccharide to the outer membrane of the cell. This is Lipid-A-disaccharide synthase from Shigella flexneri serotype 5b (strain 8401).